Here is a 196-residue protein sequence, read N- to C-terminus: uncharacterized protein (196 aa).

The protein belongs to the flavoredoxin family. Requires FMN as cofactor.

This is an uncharacterized protein from Aquifex aeolicus (strain VF5).